The primary structure comprises 339 residues: 4-hydroxythreonine-4-phosphate dehydrogenase (339 aa).

Positions 141 and 142 each coordinate substrate. His-171, His-215, and His-270 together coordinate a divalent metal cation. 3 residues coordinate substrate: Lys-278, Asn-287, and Arg-296.

This sequence belongs to the PdxA family. Homodimer. Requires Zn(2+) as cofactor. It depends on Mg(2+) as a cofactor. Co(2+) is required as a cofactor.

It localises to the cytoplasm. It carries out the reaction 4-(phosphooxy)-L-threonine + NAD(+) = 3-amino-2-oxopropyl phosphate + CO2 + NADH. It functions in the pathway cofactor biosynthesis; pyridoxine 5'-phosphate biosynthesis; pyridoxine 5'-phosphate from D-erythrose 4-phosphate: step 4/5. Functionally, catalyzes the NAD(P)-dependent oxidation of 4-(phosphooxy)-L-threonine (HTP) into 2-amino-3-oxo-4-(phosphooxy)butyric acid which spontaneously decarboxylates to form 3-amino-2-oxopropyl phosphate (AHAP). The sequence is that of 4-hydroxythreonine-4-phosphate dehydrogenase from Geobacter metallireducens (strain ATCC 53774 / DSM 7210 / GS-15).